A 479-amino-acid polypeptide reads, in one-letter code: Sulfate adenylyltransferase subunit 1 (479 aa).

Residues 25–239 (KSLLRFLTCG…EVLETVDIQR (215 aa)) form the tr-type G domain. A G1 region spans residues 34 to 41 (GSVDDGKS). Residue 34–41 (GSVDDGKS) participates in GTP binding. The G2 stretch occupies residues 92 to 96 (GITID). The segment at 113–116 (DTPG) is G3. GTP contacts are provided by residues 113 to 117 (DTPGH) and 168 to 171 (NKMD). The tract at residues 168–171 (NKMD) is G4. The G5 stretch occupies residues 206 to 208 (SAL).

It belongs to the TRAFAC class translation factor GTPase superfamily. Classic translation factor GTPase family. CysN/NodQ subfamily. Heterodimer composed of CysD, the smaller subunit, and CysN.

The catalysed reaction is sulfate + ATP + H(+) = adenosine 5'-phosphosulfate + diphosphate. Its pathway is sulfur metabolism; hydrogen sulfide biosynthesis; sulfite from sulfate: step 1/3. In terms of biological role, with CysD forms the ATP sulfurylase (ATPS) that catalyzes the adenylation of sulfate producing adenosine 5'-phosphosulfate (APS) and diphosphate, the first enzymatic step in sulfur assimilation pathway. APS synthesis involves the formation of a high-energy phosphoric-sulfuric acid anhydride bond driven by GTP hydrolysis by CysN coupled to ATP hydrolysis by CysD. This chain is Sulfate adenylyltransferase subunit 1, found in Salmonella newport (strain SL254).